A 445-amino-acid polypeptide reads, in one-letter code: Phosphoglucosamine mutase (445 aa).

The active-site Phosphoserine intermediate is Ser102. Residues Ser102, Asp241, Asp243, and Asp245 each contribute to the Mg(2+) site. Ser102 carries the post-translational modification Phosphoserine.

Belongs to the phosphohexose mutase family. Mg(2+) serves as cofactor. Activated by phosphorylation.

It catalyses the reaction alpha-D-glucosamine 1-phosphate = D-glucosamine 6-phosphate. Functionally, catalyzes the conversion of glucosamine-6-phosphate to glucosamine-1-phosphate. The sequence is that of Phosphoglucosamine mutase from Rhodococcus opacus (strain B4).